The chain runs to 201 residues: Imidazoleglycerol-phosphate dehydratase (201 aa).

The protein belongs to the imidazoleglycerol-phosphate dehydratase family.

The protein resides in the cytoplasm. It catalyses the reaction D-erythro-1-(imidazol-4-yl)glycerol 3-phosphate = 3-(imidazol-4-yl)-2-oxopropyl phosphate + H2O. The protein operates within amino-acid biosynthesis; L-histidine biosynthesis; L-histidine from 5-phospho-alpha-D-ribose 1-diphosphate: step 6/9. In Prochlorococcus marinus (strain MIT 9301), this protein is Imidazoleglycerol-phosphate dehydratase.